A 124-amino-acid polypeptide reads, in one-letter code: Protein MGF 110-4L (124 aa).

A signal peptide spans 1-28; that stretch reads MLVIFLGILGLLANQVLGLPTQAGGHLR. An N-linked (GlcNAc...) asparagine; by host glycan is attached at Asn-64. The Prevents secretion from ER signature appears at 121-124; sequence KEDL.

The protein belongs to the asfivirus MGF 110 family.

The protein localises to the virion. It is found in the host endoplasmic reticulum-Golgi intermediate compartment. Its function is as follows. Causes the redistribution of lumenal ER protein to an enlarged ERGIC compartment. The protein is Protein MGF 110-4L of African swine fever virus (strain Badajoz 1971 Vero-adapted) (Ba71V).